An 84-amino-acid chain; its full sequence is U2-theraphotoxin-Cg1b 2 (84 aa).

A signal peptide spans 1 to 21; it reads MKVSVLITLAVLGVMFLLTSA. Positions 22–48 are excised as a propeptide; the sequence is EERGSDQMDSPAWLKSMEIIFQSEERE. Cystine bridges form between Cys-49–Cys-63, Cys-56–Cys-68, and Cys-62–Cys-76.

The protein belongs to the neurotoxin 10 (Hwtx-1) family. 06 (F4b) subfamily. As to expression, expressed by the venom gland.

The protein resides in the secreted. Probable ion channel inhibitor. In Chilobrachys guangxiensis (Chinese earth tiger tarantula), this protein is U2-theraphotoxin-Cg1b 2.